The sequence spans 726 residues: Germacradienol/geosmin synthase (726 aa).

A germacradienol/germacrene D synthase region spans residues 2-354 (TQQPFQLPHF…TSAADVGALL (353 aa)). The Mg(2+) site is built by Asp86, Glu91, Asn267, Thr271, Gln276, Asp455, Asn598, Ser602, and Glu606. The DDXXD motif 1; degenerate motif lies at 86–91 (DDHFLE). Residues 355 to 726 (ADAVAQRARS…VPRSSPALTH (372 aa)) form a geosmin synthase region. The short motif at 455-459 (DDYYP) is the DDXXD motif 2; degenerate element.

It belongs to the terpene synthase family. Mg(2+) serves as cofactor.

It carries out the reaction (2E,6E)-farnesyl diphosphate + H2O = (1E,4S,5E,7R)-germacra-1(10),5-dien-11-ol + diphosphate. It catalyses the reaction (1E,4S,5E,7R)-germacra-1(10),5-dien-11-ol + H2O = (-)-geosmin + acetone. The enzyme catalyses (2E,6E)-farnesyl diphosphate = (-)-germacrene D + diphosphate. Its pathway is secondary metabolite biosynthesis; geosmin biosynthesis. The protein operates within sesquiterpene biosynthesis; germacradienol biosynthesis; germacradienol from farnesyl diphosphate: step 1/1. It participates in sesquiterpene biosynthesis; germacrene D biosynthesis; germacrene D from farnesyl diphosphate: step 1/1. Tow-domain protein where the N-terminal domain catalyzes the cyclization of farnesyl diphosphate (FPP) to a 85:15 mixture of the sesquiterpene alcohol germacradienol and the sesquiterpene hydrocarbon germacrene D. The C-terminal domain partially converts the germacradienol formed into geosmin, the characteristic odoriferous ('earthy aroma') constituent of Streptomyces species. In Streptomyces coelicolor (strain ATCC BAA-471 / A3(2) / M145), this protein is Germacradienol/geosmin synthase (cyc2).